The primary structure comprises 358 residues: Methylthioribose-1-phosphate isomerase (358 aa).

Residues 54-56, arginine 96, and glutamine 205 each bind substrate; that span reads RGA. Aspartate 246 serves as the catalytic Proton donor. Residue 256–257 coordinates substrate; that stretch reads NK.

It belongs to the eIF-2B alpha/beta/delta subunits family. MtnA subfamily.

The enzyme catalyses 5-(methylsulfanyl)-alpha-D-ribose 1-phosphate = 5-(methylsulfanyl)-D-ribulose 1-phosphate. Its pathway is amino-acid biosynthesis; L-methionine biosynthesis via salvage pathway; L-methionine from S-methyl-5-thio-alpha-D-ribose 1-phosphate: step 1/6. In terms of biological role, catalyzes the interconversion of methylthioribose-1-phosphate (MTR-1-P) into methylthioribulose-1-phosphate (MTRu-1-P). This Pseudomonas savastanoi pv. phaseolicola (strain 1448A / Race 6) (Pseudomonas syringae pv. phaseolicola (strain 1448A / Race 6)) protein is Methylthioribose-1-phosphate isomerase.